We begin with the raw amino-acid sequence, 371 residues long: Aminomethyltransferase (371 aa).

It belongs to the GcvT family. In terms of assembly, the glycine cleavage system is composed of four proteins: P, T, L and H.

It carries out the reaction N(6)-[(R)-S(8)-aminomethyldihydrolipoyl]-L-lysyl-[protein] + (6S)-5,6,7,8-tetrahydrofolate = N(6)-[(R)-dihydrolipoyl]-L-lysyl-[protein] + (6R)-5,10-methylene-5,6,7,8-tetrahydrofolate + NH4(+). In terms of biological role, the glycine cleavage system catalyzes the degradation of glycine. The chain is Aminomethyltransferase from Oceanobacillus iheyensis (strain DSM 14371 / CIP 107618 / JCM 11309 / KCTC 3954 / HTE831).